Consider the following 161-residue polypeptide: Endoribonuclease YbeY (161 aa).

Histidine 127, histidine 131, and histidine 137 together coordinate Zn(2+).

It belongs to the endoribonuclease YbeY family. Zn(2+) is required as a cofactor.

It is found in the cytoplasm. Its function is as follows. Single strand-specific metallo-endoribonuclease involved in late-stage 70S ribosome quality control and in maturation of the 3' terminus of the 16S rRNA. The protein is Endoribonuclease YbeY of Listeria innocua serovar 6a (strain ATCC BAA-680 / CLIP 11262).